The chain runs to 108 residues: Glutaredoxin-1 (108 aa).

The 104-residue stretch at 3-106 (EEFVQQRLAN…DILSSIGVLR (104 aa)) folds into the Glutaredoxin domain. The cysteines at positions 23 and 26 are disulfide-linked.

The protein belongs to the glutaredoxin family.

The protein resides in the virion. Functionally, has thioltransferase and dehydroascorbate reductase activities. In Cowpox virus (strain GRI-90 / Grishak) (CPV), this protein is Glutaredoxin-1 (OPG075).